We begin with the raw amino-acid sequence, 694 residues long: Elongation factor G (694 aa).

Residues 8–287 form the tr-type G domain; it reads EDYRNFGIMA…AVVEFLPAPT (280 aa). Residues 17 to 24, 86 to 90, and 140 to 143 each bind GTP; these read AHIDAGKT, DTPGH, and NKMD.

Belongs to the TRAFAC class translation factor GTPase superfamily. Classic translation factor GTPase family. EF-G/EF-2 subfamily.

It localises to the cytoplasm. Catalyzes the GTP-dependent ribosomal translocation step during translation elongation. During this step, the ribosome changes from the pre-translocational (PRE) to the post-translocational (POST) state as the newly formed A-site-bound peptidyl-tRNA and P-site-bound deacylated tRNA move to the P and E sites, respectively. Catalyzes the coordinated movement of the two tRNA molecules, the mRNA and conformational changes in the ribosome. The protein is Elongation factor G of Brucella ovis (strain ATCC 25840 / 63/290 / NCTC 10512).